The primary structure comprises 169 residues: Ureidoglycolate lyase (169 aa).

It belongs to the ureidoglycolate lyase family. As to quaternary structure, homodimer. Ni(2+) serves as cofactor.

It carries out the reaction (S)-ureidoglycolate = urea + glyoxylate. It participates in nitrogen metabolism; (S)-allantoin degradation. Functionally, catalyzes the catabolism of the allantoin degradation intermediate (S)-ureidoglycolate, generating urea and glyoxylate. Involved in the utilization of allantoin as nitrogen source. The chain is Ureidoglycolate lyase from Brucella melitensis biotype 2 (strain ATCC 23457).